Consider the following 424-residue polypeptide: Glucan endo-1,3-alpha-glucosidase agn1 (424 aa).

Positions 1-20 are cleaved as a signal peptide; sequence MKLVLFLVLLFSALINLTNA.

Belongs to the glycosyl hydrolase 71 family. In terms of assembly, monomer. In terms of processing, not glycosylated.

The protein resides in the secreted. It localises to the cell wall. The enzyme catalyses Endohydrolysis of (1-&gt;3)-alpha-D-glucosidic linkages in isolichenin, pseudonigeran and nigeran.. Functionally, has a role in cell separation where it is required for the degradation of the cell wall material surrounding the septum (the septum edging) which must be hydrolyzed before full separation of the daughter cells can occur. Hydrolyzes 1,3-alpha-glucan predominantly into pentasaccharides. This is Glucan endo-1,3-alpha-glucosidase agn1 (agn1) from Schizosaccharomyces pombe (strain 972 / ATCC 24843) (Fission yeast).